A 216-amino-acid polypeptide reads, in one-letter code: 4-hydroxy-tetrahydrodipicolinate reductase (216 aa).

Residues 7–12 (GYSGRM), 71–73 (GTT), and 95–98 (AYNF) contribute to the NAD(+) site. His127 acts as the Proton donor/acceptor in catalysis. A (S)-2,3,4,5-tetrahydrodipicolinate-binding site is contributed by His128. Lys131 functions as the Proton donor in the catalytic mechanism. 137–138 (GT) is a (S)-2,3,4,5-tetrahydrodipicolinate binding site.

It belongs to the DapB family.

It localises to the cytoplasm. The enzyme catalyses (S)-2,3,4,5-tetrahydrodipicolinate + NAD(+) + H2O = (2S,4S)-4-hydroxy-2,3,4,5-tetrahydrodipicolinate + NADH + H(+). The catalysed reaction is (S)-2,3,4,5-tetrahydrodipicolinate + NADP(+) + H2O = (2S,4S)-4-hydroxy-2,3,4,5-tetrahydrodipicolinate + NADPH + H(+). It participates in amino-acid biosynthesis; L-lysine biosynthesis via DAP pathway; (S)-tetrahydrodipicolinate from L-aspartate: step 4/4. Functionally, catalyzes the conversion of 4-hydroxy-tetrahydrodipicolinate (HTPA) to tetrahydrodipicolinate. This Thermotoga sp. (strain RQ2) protein is 4-hydroxy-tetrahydrodipicolinate reductase.